A 397-amino-acid chain; its full sequence is Argininosuccinate synthase (397 aa).

An ATP-binding site is contributed by 7–15 (AFSGGLDTT). Tyrosine 84 contacts L-citrulline. Residue glycine 114 participates in ATP binding. Threonine 116, asparagine 120, and aspartate 121 together coordinate L-aspartate. Residue asparagine 120 coordinates L-citrulline. L-citrulline-binding residues include arginine 124, serine 170, serine 179, glutamate 254, and tyrosine 266.

Belongs to the argininosuccinate synthase family. Type 1 subfamily. Homotetramer.

The protein localises to the cytoplasm. It carries out the reaction L-citrulline + L-aspartate + ATP = 2-(N(omega)-L-arginino)succinate + AMP + diphosphate + H(+). It functions in the pathway amino-acid biosynthesis; L-arginine biosynthesis; L-arginine from L-ornithine and carbamoyl phosphate: step 2/3. This chain is Argininosuccinate synthase, found in Haloquadratum walsbyi (strain DSM 16790 / HBSQ001).